A 131-amino-acid chain; its full sequence is Large ribosomal subunit protein bL12 (131 aa).

Belongs to the bacterial ribosomal protein bL12 family. As to quaternary structure, homodimer. Part of the ribosomal stalk of the 50S ribosomal subunit. Forms a multimeric L10(L12)X complex, where L10 forms an elongated spine to which 2 to 4 L12 dimers bind in a sequential fashion. Binds GTP-bound translation factors.

In terms of biological role, forms part of the ribosomal stalk which helps the ribosome interact with GTP-bound translation factors. Is thus essential for accurate translation. This is Large ribosomal subunit protein bL12 from Prochlorococcus marinus (strain NATL2A).